The chain runs to 250 residues: Tetrathionate reductase subunit B (250 aa).

The segment at residues 1 to 33 (MWTGVNMDSSKRQFLQQLGVLTAGASLVPLAEA) is a signal peptide (tat-type signal). 3 4Fe-4S ferredoxin-type domains span residues 50 to 79 (YAML…PQGA), 97 to 128 (VTNV…QRED), and 129 to 158 (GIVV…INHE). [4Fe-4S] cluster contacts are provided by C59, C62, C65, C69, C106, C109, C114, C118, C138, C141, C144, C148, C165, C168, C180, and C184.

As to quaternary structure, probably composed of three subunits: TtrA, TtrB and TtrC. Post-translationally, predicted to be exported by the Tat system. The position of the signal peptide cleavage has not been experimentally proven.

The protein localises to the periplasm. Its subcellular location is the cell inner membrane. Functionally, part of a membrane-bound tetrathionate reductase that catalyzes the reduction of tetrathionate to thiosulfate. TtrB is probably involved in transfer of electrons from TtrC to TtrA. During mice infection, the ability to use tetrathionate as an electron acceptor is a growth advantage for S.typhimurium over the competing microbiota in the lumen of the inflamed gut. The protein is Tetrathionate reductase subunit B (ttrB) of Salmonella typhimurium (strain LT2 / SGSC1412 / ATCC 700720).